Reading from the N-terminus, the 570-residue chain is Double-stranded RNA-binding protein Staufen homolog 2 (570 aa).

In terms of domain architecture, DRBM 1 spans 8–75 (TAMCLVNELA…ANKALTESTL (68 aa)). 2 disordered regions span residues 71–94 (TEST…PGSI) and 181–203 (NEPI…DDKD). Positions 83–94 (PKSNVNNNPGSI) are enriched in polar residues. One can recognise a DRBM 2 domain in the interval 95–181 (TPTVELNGLA…AMKALQALQN (87 aa)). At S188 the chain carries Phosphoserine. The segment covering 194–203 (SGKDVDDDKD) has biased composition (basic and acidic residues). DRBM domains are found at residues 207–274 (SEIS…ELKK) and 307–375 (NPIS…QLGY). 2 consecutive short sequence motifs (nuclear localization signal) follow at residues 273–291 (KKLP…FKKR) and 373–412 (LGYK…PKGI). The tract at residues 381–570 (LQDQLEKTGE…QDCKKSNSAV (190 aa)) is required for dendritic transport. A disordered region spans residues 387 to 409 (KTGENKGWSGPKPGFPEPTNNTP). S395 is subject to Phosphoserine. Position 405 is a phosphothreonine (T405). Residues S416, S426, S440, S455, and S492 each carry the phosphoserine modification. The segment at 528 to 570 (DGAMNIEKGSLEKQAKHLREKADNNQAPPGSIAQDCKKSNSAV) is disordered. Positions 536 to 550 (GSLEKQAKHLREKAD) are enriched in basic and acidic residues.

As to quaternary structure, interacts with the exportin XPO5. This requires RNA and RAN bound to GTP. Interacts with microtubules. Isoform 2 and isoform 3 may also interact with ribosomes, and this association is independent of translation. Identified in a mRNP complex, at least composed of DHX9, DDX3X, ELAVL1, HNRNPU, IGF2BP1, ILF3, PABPC1, PCBP2, PTBP2, STAU1, STAU2, SYNCRIP and YBX1. Interacts with TRIM71 (via NHL repeats) in an RNA-dependent manner.

It is found in the cytoplasm. It localises to the nucleus. The protein localises to the nucleolus. Its subcellular location is the endoplasmic reticulum. Functionally, RNA-binding protein required for the microtubule-dependent transport of neuronal RNA from the cell body to the dendrite. As protein synthesis occurs within the dendrite, the localization of specific mRNAs to dendrites may be a prerequisite for neurite outgrowth and plasticity at sites distant from the cell body. The chain is Double-stranded RNA-binding protein Staufen homolog 2 (STAU2) from Homo sapiens (Human).